We begin with the raw amino-acid sequence, 457 residues long: Argininosuccinate lyase (457 aa).

Belongs to the lyase 1 family. Argininosuccinate lyase subfamily.

It localises to the cytoplasm. The catalysed reaction is 2-(N(omega)-L-arginino)succinate = fumarate + L-arginine. Its pathway is amino-acid biosynthesis; L-arginine biosynthesis; L-arginine from L-ornithine and carbamoyl phosphate: step 3/3. This Escherichia coli O1:K1 / APEC protein is Argininosuccinate lyase.